Consider the following 550-residue polypeptide: Arginine--tRNA ligase (550 aa).

The 'HIGH' region motif lies at 130–140; sequence ANPTGPIHIGG.

The protein belongs to the class-I aminoacyl-tRNA synthetase family. In terms of assembly, monomer.

The protein localises to the cytoplasm. It catalyses the reaction tRNA(Arg) + L-arginine + ATP = L-arginyl-tRNA(Arg) + AMP + diphosphate. This is Arginine--tRNA ligase from Mycobacterium ulcerans (strain Agy99).